Consider the following 260-residue polypeptide: 21S rRNA pseudouridine(2819) synthase (260 aa).

Asp-68 is an active-site residue.

It belongs to the pseudouridine synthase RluA family.

Its subcellular location is the mitochondrion. It catalyses the reaction uridine(2819) in 21S rRNA = pseudouridine(2819) in 21S rRNA. Pseudouridylate synthase responsible for the pseudouridine-2819 formation in mitochondrial 21S rRNA. May modulate the efficiency or the fidelity of the mitochondrial translation machinery. In Eremothecium gossypii (strain ATCC 10895 / CBS 109.51 / FGSC 9923 / NRRL Y-1056) (Yeast), this protein is 21S rRNA pseudouridine(2819) synthase (PUS5).